A 2944-amino-acid polypeptide reads, in one-letter code: Collagen alpha-1(VII) chain (2944 aa).

Residues 1–16 form the signal peptide; that stretch reads MTLRLLVAALCAGILA. The nonhelical region (NC1) stretch occupies residues 17 to 1253; sequence EAPRVRAQHR…PEPCPVYCPK (1237 aa). Residues 38–211 enclose the VWFA 1 domain; the sequence is DIVFLLDGSS…SILRTLLPLV (174 aa). 9 consecutive Fibronectin type-III domains span residues 234–329, 330–416, 417–507, 510–597, 600–687, 688–775, 778–866, 869–957, and 958–1051; these read APRD…TALE, GPEL…TDAS, VEQT…PELP, PVTD…EPET, AVPG…DPLG, PVRT…APEP, RVSR…PPEA, ALGT…SPRV, and PSIE…CPRG. N337 is a glycosylation site (N-linked (GlcNAc...) asparagine). A disordered region spans residues 632 to 651; the sequence is STGSGPESSQTLPPDSTATD. N786 carries an N-linked (GlcNAc...) asparagine glycan. Positions 1054 to 1229 constitute a VWFA 2 domain; that stretch reads DVVFLPHATQ…PSLDQAVSGL (176 aa). An N-linked (GlcNAc...) asparagine glycan is attached at N1109. Short sequence motifs (cell attachment site) lie at residues 1170 to 1172 and 1334 to 1336; these read RGD. Disordered stretches follow at residues 1239–1941, 1963–2782, and 2837–2872; these read TTQP…SVPN, WDES…EKGE, and SHAE…PWDS. An interrupted collagenous region region spans residues 1254 to 1477; sequence GQKGEPGEMG…GPRGPPGAIG (224 aa). Positions 1254–2784 are triple-helical region; the sequence is GQKGEPGEMG…GPRGEKGEAA (1531 aa). Over residues 1336–1346 the composition is skewed to basic and acidic residues; sequence DPGERGPRGPK. The span at 1355–1365 shows a compositional bias: gly residues; the sequence is VIGGEGPGLPG. Basic and acidic residues predominate over residues 1399–1408; sequence KGDKGDRGER. Pro residues predominate over residues 1429–1440; that stretch reads PGSPGPQGPVGP. Low complexity predominate over residues 1574–1583; the sequence is RGPPGLVLPG. Composition is skewed to basic and acidic residues over residues 1630–1642, 1669–1683, and 1715–1733; these read RGRD…KGDE, VGEK…EDGR, and AREK…RGPK. Positions 1786-1802 are enriched in low complexity; sequence KPGAAGPSGPNGAAGKA. Residues 1852 to 1877 are compositionally biased toward basic and acidic residues; that stretch reads EDGRKGEKGDSGASGREGRDGPKGER. Positions 1886–1897 are enriched in pro residues; the sequence is QGPPGLPGPVGP. Residues 1898-1911 are compositionally biased toward gly residues; it reads PGQGFPGVPGGTGP. Basic and acidic residues predominate over residues 1974–1984; sequence PERRRGPKGDS. A Cell attachment site motif is present at residues 2008–2010; it reads RGD. Residues P2036 and P2039 each carry the 4-hydroxyproline modification. Over residues 2046-2055 the composition is skewed to gly residues; sequence GRAGGVGEAG. Basic and acidic residues predominate over residues 2056-2074; sequence RPGERGERGEKGERGEQGR. A compositionally biased stretch (pro residues) spans 2078-2092; sequence PGLPGTPGPPGPPGP. A 4-hydroxyproline mark is found at P2084, P2087, and P2090. Positions 2127–2143 are enriched in basic and acidic residues; that stretch reads PKGDRGVPGIKGDRGEP. 4-hydroxyproline is present on residues P2167, P2176, P2185, and P2188. Composition is skewed to low complexity over residues 2191–2206 and 2235–2250; these read PGLA…SGLK and SGLV…PGQV. Basic and acidic residues predominate over residues 2328–2346; the sequence is AKGDRGLPGPRGEKGEAGR. Low complexity predominate over residues 2387 to 2406; the sequence is VKGDLGLPGLPGAPGVVGFP. Residues 2438–2448 are compositionally biased toward pro residues; it reads PLGPPGPPGSV. Composition is skewed to basic and acidic residues over residues 2471-2486 and 2534-2570; these read RGER…DGRP and AKGD…EPGD. The Cell attachment site motif lies at 2553 to 2555; sequence RGD. Low complexity predominate over residues 2573–2601; that stretch reads SAGLPGLRGLLGPQGQPGAAGIPGDPGSP. Residues K2625 and K2631 each carry the 5-hydroxylysine; alternate modification. O-linked (Gal...) hydroxylysine; alternate glycans are attached at residues K2625 and K2631. 3 positions are modified to 4-hydroxyproline: P2664, P2667, and P2673. Over residues 2704–2713 the composition is skewed to gly residues; it reads GTPGIGGFPG. Low complexity predominate over residues 2749–2762; that stretch reads GERVVGAPGVPGAP. The segment at 2785-2944 is nonhelical region (NC2); it reads LTEDDIRGFV…QSQGTGTAQD (160 aa). A compositionally biased stretch (basic and acidic residues) spans 2837–2847; that stretch reads SHAEEEERVPP. Residues 2848–2872 are compositionally biased toward acidic residues; that stretch reads EDDEYSEYSEYSVEEYQDPEAPWDS. In terms of domain architecture, BPTI/Kunitz inhibitor spans 2872-2944; that stretch reads SDDPCSLPLD…QSQGTGTAQD (73 aa). Disulfide bonds link C2876/C2929, C2885/C2912, and C2904/C2925.

In terms of assembly, homotrimer. Interacts with MIA3/TANGO1; facilitating its loading into transport carriers and subsequent secretion. Post-translationally, prolines at the third position of the tripeptide repeating unit (G-X-Y) are hydroxylated in some or all of the chains.

The protein resides in the secreted. Its subcellular location is the extracellular space. The protein localises to the extracellular matrix. It is found in the basement membrane. Its function is as follows. Stratified squamous epithelial basement membrane protein that forms anchoring fibrils which may contribute to epithelial basement membrane organization and adherence by interacting with extracellular matrix (ECM) proteins such as type IV collagen. The sequence is that of Collagen alpha-1(VII) chain (COL7A1) from Homo sapiens (Human).